We begin with the raw amino-acid sequence, 449 residues long: 3-phosphoshikimate 1-carboxyvinyltransferase (449 aa).

Lysine 28, serine 29, and arginine 33 together coordinate 3-phosphoshikimate. Position 28 (lysine 28) interacts with phosphoenolpyruvate. Residues glycine 105 and arginine 133 each contribute to the phosphoenolpyruvate site. 3-phosphoshikimate contacts are provided by serine 179, glutamine 181, aspartate 332, and lysine 359. Glutamine 181 contacts phosphoenolpyruvate. The active-site Proton acceptor is aspartate 332. Phosphoenolpyruvate contacts are provided by arginine 363 and arginine 406.

The protein belongs to the EPSP synthase family. As to quaternary structure, monomer.

It is found in the cytoplasm. It catalyses the reaction 3-phosphoshikimate + phosphoenolpyruvate = 5-O-(1-carboxyvinyl)-3-phosphoshikimate + phosphate. Its pathway is metabolic intermediate biosynthesis; chorismate biosynthesis; chorismate from D-erythrose 4-phosphate and phosphoenolpyruvate: step 6/7. Functionally, catalyzes the transfer of the enolpyruvyl moiety of phosphoenolpyruvate (PEP) to the 5-hydroxyl of shikimate-3-phosphate (S3P) to produce enolpyruvyl shikimate-3-phosphate and inorganic phosphate. The chain is 3-phosphoshikimate 1-carboxyvinyltransferase from Nitrobacter hamburgensis (strain DSM 10229 / NCIMB 13809 / X14).